Consider the following 88-residue polypeptide: Small ribosomal subunit protein uS17 (88 aa).

It belongs to the universal ribosomal protein uS17 family. In terms of assembly, part of the 30S ribosomal subunit.

In terms of biological role, one of the primary rRNA binding proteins, it binds specifically to the 5'-end of 16S ribosomal RNA. The sequence is that of Small ribosomal subunit protein uS17 from Lactobacillus delbrueckii subsp. bulgaricus (strain ATCC 11842 / DSM 20081 / BCRC 10696 / JCM 1002 / NBRC 13953 / NCIMB 11778 / NCTC 12712 / WDCM 00102 / Lb 14).